The chain runs to 593 residues: Prospero homeobox protein 2 (593 aa).

Disordered stretches follow at residues Cys24–Ser48, Ser79–Arg130, Thr153–Cys199, Gln260–Lys284, Pro298–Leu333, and Gly356–Leu388. Over residues Arg87–Arg99 the composition is skewed to basic and acidic residues. Low complexity predominate over residues Pro167 to Ser181. The segment covering Trp363–Glu380 has biased composition (polar residues). A Prospero-type homeo domain is found at Gln433–Met491. The tract at residues Gln433 to Phe591 is homeo-Prospero. Positions Glu492 to Phe591 constitute a Prospero domain.

Belongs to the Prospero homeodomain family. In terms of tissue distribution, expressed in testis.

The protein resides in the nucleus. Its function is as follows. Transcription regulator. Does not seem to be essential for embryonic development and postnatal survival. The chain is Prospero homeobox protein 2 (Prox2) from Mus musculus (Mouse).